The chain runs to 1465 residues: MSDLFAKLMDQIEMPLDMRRSSAFSSADIIEVKVHSVSRLWEFHFAFAAVLPIATYRELHDRLIRTFEAADIKVTFDIQAAQVDYSDDLLQAYYQEAFEHAPCNSASFKSSFSKLKVTYEDDKLIIAAPGFVNNDHFRKNHLPNLVKQFEAFGFGTLTIDMVSDQEMTEHLTKDFVSSRQALVEKAVQDNLEAQKSLEAMMPPAEEATPAPKFDYKERVAQRQAGFEKAAITPMIEIETEENRIVFEGMVFDVERKTTRTGRHIINFKMTDYTSSFALQKWAKDDEELRKFDMIAKGAWLRVQGNIETNPFTKSLTMNVQQVKEIVHHDRKDLMPEGQKRVEFHAHTNMSTMDALPTVESLIDTAAKWGHKAVAITDHANVQSFPHGYHRARKAGIKAIFGLEANIVEDKVPISYDPVDMDLHEATYVVFDVETTGLSAMNNDLIQIAASKMFKGNIVEQFDEFIDPGHPLSAFTTELTGITDKHLQDAKPLVTVLKAFQDFCKDSILVAHNASFDVGFMNANYERHDLPKITQPVIDTLEFARNLYPEYKRHGLGPLTKRFQVSLDHHHMANYDAEATGRLLFIFLKDAREKHGIKNLLQLNTDLVAEDSYKKARIKHATIYVQNQVGLKNMFKLVSLSNIKYFEGVPRIPRTVLDAHREGLLLGTACSDGEVFDAVLTKGIDAAVDLAKYYDFIEIMPPAIYQPLVVRELIKDQAGIEQVIRDLIEVGKRANKPVLATGNVHYLEPEEEIYREIIVRSLGQGAMINRTIGRGEGAQPAPLPKAHFRTTNEMLDEFAFLGKDLAYQVVVENTQDFADRIEEVEVVKGDLYTPYIDKAEETVAELTYQKAFEIYGNPLPDIIDLRIEKELTSILGNGFAVIYLASQMLVNRSNERGYLVGSRGSVGSSFVATMIGITEVNPMPPHYVCPSCQHSEFITDGSVGSGYDLPNKPCPKCGTPYQKDGQDIPFETFLGFDGDKVPDIDLNFSGDDQPSAHLDVRDIFGDEYAFRAGTVGTVAEKTAYGFVKGYERDYGKFYRDAEVDRLAAGAAGVKRTTGQHPGGIVVIPNYMDVYDFTPVQYPADDVTASWQTTHFNFHDIDENVLKLDILGHDDPTMIRKLQDLSGIDPITIPADDPGVMALFSGTEVLGVTPEQIGTPTGMLGIPEFGTNFVRGMVNETHPTTFAELLQLSGLSHGTDVWLGNAQDLIKEGIATLKTVIGCRDDIMVYLMHAGLEPKMAFTIMERVRKGLWLKISEEERNGYIDAMRENNVPDWYIESCGKIKYMFPKAHAAAYVLMALRVAYFKVHHPIMYYCAYFSIRAKAFELKTMSGGLDAVKARMEDITIKRKNNEATNVENDLFTTLEIVNEMLERGFKFGKLDLYKSDAIEFQIKGDTLIPPFIALEGLGENVGKQIVKARQEGEFLSKMELRKRGGASSTLVEKMDEMGILGNMPEDNQLSLFDDFF.

Positions Tyr427–Leu583 constitute an Exonuclease domain.

Belongs to the DNA polymerase type-C family. PolC subfamily.

Its subcellular location is the cytoplasm. The catalysed reaction is DNA(n) + a 2'-deoxyribonucleoside 5'-triphosphate = DNA(n+1) + diphosphate. Functionally, required for replicative DNA synthesis. This DNA polymerase also exhibits 3' to 5' exonuclease activity. This Streptococcus pyogenes serotype M2 (strain MGAS10270) protein is DNA polymerase III PolC-type.